A 110-amino-acid polypeptide reads, in one-letter code: Large ribosomal subunit protein uL22 (110 aa).

The protein belongs to the universal ribosomal protein uL22 family. As to quaternary structure, part of the 50S ribosomal subunit.

In terms of biological role, this protein binds specifically to 23S rRNA; its binding is stimulated by other ribosomal proteins, e.g. L4, L17, and L20. It is important during the early stages of 50S assembly. It makes multiple contacts with different domains of the 23S rRNA in the assembled 50S subunit and ribosome. Its function is as follows. The globular domain of the protein is located near the polypeptide exit tunnel on the outside of the subunit, while an extended beta-hairpin is found that lines the wall of the exit tunnel in the center of the 70S ribosome. This chain is Large ribosomal subunit protein uL22, found in Leptospira interrogans serogroup Icterohaemorrhagiae serovar copenhageni (strain Fiocruz L1-130).